The primary structure comprises 212 residues: dITP/XTP pyrophosphatase (212 aa).

S7–K12 serves as a coordination point for substrate. The Mg(2+) site is built by E39 and D68. D68 serves as the catalytic Proton acceptor. Substrate-binding positions include S69, F165–D168, K188, and H193–R194.

The protein belongs to the HAM1 NTPase family. Homodimer. Mg(2+) is required as a cofactor.

The enzyme catalyses XTP + H2O = XMP + diphosphate + H(+). It catalyses the reaction dITP + H2O = dIMP + diphosphate + H(+). The catalysed reaction is ITP + H2O = IMP + diphosphate + H(+). Functionally, pyrophosphatase that catalyzes the hydrolysis of nucleoside triphosphates to their monophosphate derivatives, with a high preference for the non-canonical purine nucleotides XTP (xanthosine triphosphate), dITP (deoxyinosine triphosphate) and ITP. Seems to function as a house-cleaning enzyme that removes non-canonical purine nucleotides from the nucleotide pool, thus preventing their incorporation into DNA/RNA and avoiding chromosomal lesions. The protein is dITP/XTP pyrophosphatase of Leptothrix cholodnii (strain ATCC 51168 / LMG 8142 / SP-6) (Leptothrix discophora (strain SP-6)).